The primary structure comprises 514 residues: ATP synthase subunit alpha (514 aa).

170–177 lines the ATP pocket; sequence GDRQIGKT.

This sequence belongs to the ATPase alpha/beta chains family. As to quaternary structure, F-type ATPases have 2 components, CF(1) - the catalytic core - and CF(0) - the membrane proton channel. CF(1) has five subunits: alpha(3), beta(3), gamma(1), delta(1), epsilon(1). CF(0) has three main subunits: a(1), b(2) and c(9-12). The alpha and beta chains form an alternating ring which encloses part of the gamma chain. CF(1) is attached to CF(0) by a central stalk formed by the gamma and epsilon chains, while a peripheral stalk is formed by the delta and b chains.

It localises to the cell inner membrane. The catalysed reaction is ATP + H2O + 4 H(+)(in) = ADP + phosphate + 5 H(+)(out). In terms of biological role, produces ATP from ADP in the presence of a proton gradient across the membrane. The alpha chain is a regulatory subunit. This chain is ATP synthase subunit alpha, found in Pseudomonas putida (strain ATCC 47054 / DSM 6125 / CFBP 8728 / NCIMB 11950 / KT2440).